A 414-amino-acid chain; its full sequence is Histidine--tRNA ligase (414 aa).

The protein belongs to the class-II aminoacyl-tRNA synthetase family. Homodimer.

The protein resides in the cytoplasm. It carries out the reaction tRNA(His) + L-histidine + ATP = L-histidyl-tRNA(His) + AMP + diphosphate + H(+). The polypeptide is Histidine--tRNA ligase (Pelobacter propionicus (strain DSM 2379 / NBRC 103807 / OttBd1)).